The following is a 367-amino-acid chain: MEKYIGLMSGTSLDGVDAVIVETNGTTINLLGHADYPMDPQLKADLLAVCTGQQTNLKVIGEIDHRLGHLFAEATLHLLSTLNIASSDITAIGSHGQTVFHSPDAEYPFTMQLGDSNIIAAKTGIDTVADFRRKDMALGGQGAPLVPAFHNTLFGKPESTNVILNIGGISNISILQKDSPVIGYDTGPGNMLMDSWITEHKGESYDKDGAWARSGQIIDELLNQLKTHDYFARPYPKSTGRELFNLDWFAQYIENKPYQPQDVQATLLEFTVTTIVDQVIRFQVGNDTKLLVCGGGAHNQFLMERLQYHLPNWAVSTTNDYNVDSDNMEAMAFAWLAHQRIHGLPSNEPDVTGASRYASLGVIYPAN.

10–17 (GTSLDGVD) serves as a coordination point for ATP.

The protein belongs to the anhydro-N-acetylmuramic acid kinase family.

It catalyses the reaction 1,6-anhydro-N-acetyl-beta-muramate + ATP + H2O = N-acetyl-D-muramate 6-phosphate + ADP + H(+). It functions in the pathway amino-sugar metabolism; 1,6-anhydro-N-acetylmuramate degradation. The protein operates within cell wall biogenesis; peptidoglycan recycling. In terms of biological role, catalyzes the specific phosphorylation of 1,6-anhydro-N-acetylmuramic acid (anhMurNAc) with the simultaneous cleavage of the 1,6-anhydro ring, generating MurNAc-6-P. Is required for the utilization of anhMurNAc either imported from the medium or derived from its own cell wall murein, and thus plays a role in cell wall recycling. The chain is Anhydro-N-acetylmuramic acid kinase from Aliivibrio fischeri (strain ATCC 700601 / ES114) (Vibrio fischeri).